The chain runs to 315 residues: Tryptophan prenyltransferase ComQ (315 aa).

Residues Asp-95 and Asp-99 each coordinate Mg(2+).

Belongs to the FPP/GGPP synthase family. Mg(2+) serves as cofactor.

It is found in the cell membrane. It carries out the reaction L-tryptophyl-[protein] + (2E,6E)-farnesyl diphosphate = (2S,3R)-3-farnesyl-2,3-dihydro-2,N(alpha)-cyclo-L-tryptophyl-[protein] + diphosphate. In terms of biological role, part of a major quorum-sensing system that regulates the development of genetic competence. Involved in the maturation of the competence pheromone ComX. Acts by catalyzing the transfer of a farnesyl group on the ComX pheromone. In vitro, can also catalyze the farnesylation of single tryptophan and tryptophan derivatives. The polypeptide is Tryptophan prenyltransferase ComQ (Bacillus subtilis subsp. natto (strain BEST195)).